We begin with the raw amino-acid sequence, 269 residues long: Malonyl-[acyl-carrier protein] O-methyltransferase (269 aa).

This sequence belongs to the methyltransferase superfamily.

It catalyses the reaction malonyl-[ACP] + S-adenosyl-L-methionine = malonyl-[ACP] methyl ester + S-adenosyl-L-homocysteine. The protein operates within cofactor biosynthesis; biotin biosynthesis. Its function is as follows. Converts the free carboxyl group of a malonyl-thioester to its methyl ester by transfer of a methyl group from S-adenosyl-L-methionine (SAM). It allows to synthesize pimeloyl-ACP via the fatty acid synthetic pathway. The chain is Malonyl-[acyl-carrier protein] O-methyltransferase from Bacillus cereus (strain ATCC 14579 / DSM 31 / CCUG 7414 / JCM 2152 / NBRC 15305 / NCIMB 9373 / NCTC 2599 / NRRL B-3711).